We begin with the raw amino-acid sequence, 276 residues long: Undecaprenyl-diphosphatase 2 (276 aa).

The next 8 helical transmembrane spans lie at 1–21, 44–64, 87–107, 114–134, 150–170, 190–210, 222–242, and 251–271; these read MSLW…LFPV, QLLP…LWYF, GHLM…GLLL, VFHD…LLWL, MTFK…IPGF, AAEF…VLEL, DALL…RFLM, and LASF…WFML.

It belongs to the UppP family.

It is found in the cell inner membrane. It carries out the reaction di-trans,octa-cis-undecaprenyl diphosphate + H2O = di-trans,octa-cis-undecaprenyl phosphate + phosphate + H(+). Catalyzes the dephosphorylation of undecaprenyl diphosphate (UPP). Confers resistance to bacitracin. The sequence is that of Undecaprenyl-diphosphatase 2 from Burkholderia orbicola (strain AU 1054).